A 389-amino-acid polypeptide reads, in one-letter code: Allantoicase (389 aa).

This sequence belongs to the allantoicase family.

It catalyses the reaction allantoate + H2O = (S)-ureidoglycolate + urea. It functions in the pathway nitrogen metabolism; (S)-allantoin degradation; (S)-ureidoglycolate from allantoate (aminidohydrolase route): step 1/1. In terms of biological role, utilization of purines as secondary nitrogen sources, when primary sources are limiting. The polypeptide is Allantoicase (allc) (Xenopus tropicalis (Western clawed frog)).